The chain runs to 449 residues: XK-related protein 2 (449 aa).

The next 10 helical transmembrane spans lie at 35–55, 68–88, 98–118, 174–194, 202–222, 241–261, 269–289, 306–326, 357–377, and 382–402; these read FSILFSTFLYCGEAASALYMV, TYTFSFFMFSSIMVQLTLIFV, LSLFMHLILLGPVIRCLEAMI, IQAFLGSVPQLTYQLYVSLIS, VVLMVFSLVSVTYGATLCNML, LCITIWRTLEITSRLLILVLF, AVPFLVLNFLIILFEPWIKFW, VGTLVVLISVTILYAGINFSC, LVENVIMVLVFKFFGVKVLLN, and LIALQLIIAYLISIGFMLLFF.

This sequence belongs to the XK family. Expressed predominantly in the placenta, in syncytiotrophoblasts. Moderate levels in the adrenal gland, low levels in the trachea and very low levels in the bone marrow.

The protein resides in the cell membrane. This chain is XK-related protein 2 (XKRX), found in Homo sapiens (Human).